The primary structure comprises 242 residues: 6-phosphogluconolactonase (242 aa).

It belongs to the glucosamine/galactosamine-6-phosphate isomerase family. 6-phosphogluconolactonase subfamily.

The enzyme catalyses 6-phospho-D-glucono-1,5-lactone + H2O = 6-phospho-D-gluconate + H(+). It functions in the pathway carbohydrate degradation; pentose phosphate pathway; D-ribulose 5-phosphate from D-glucose 6-phosphate (oxidative stage): step 2/3. Hydrolysis of 6-phosphogluconolactone to 6-phosphogluconate. The sequence is that of 6-phosphogluconolactonase (pgl) from Pseudomonas putida (Arthrobacter siderocapsulatus).